The sequence spans 378 residues: Erythronate-4-phosphate dehydrogenase (378 aa).

2 residues coordinate substrate: Ser45 and Thr66. NAD(+)-binding residues include Asp146 and Thr175. Arg208 is a catalytic residue. Asp232 provides a ligand contact to NAD(+). Residue Glu237 is part of the active site. His254 (proton donor) is an active-site residue. An NAD(+)-binding site is contributed by Gly257. Tyr258 is a substrate binding site.

It belongs to the D-isomer specific 2-hydroxyacid dehydrogenase family. PdxB subfamily. Homodimer.

Its subcellular location is the cytoplasm. The catalysed reaction is 4-phospho-D-erythronate + NAD(+) = (R)-3-hydroxy-2-oxo-4-phosphooxybutanoate + NADH + H(+). It functions in the pathway cofactor biosynthesis; pyridoxine 5'-phosphate biosynthesis; pyridoxine 5'-phosphate from D-erythrose 4-phosphate: step 2/5. In terms of biological role, catalyzes the oxidation of erythronate-4-phosphate to 3-hydroxy-2-oxo-4-phosphonooxybutanoate. This is Erythronate-4-phosphate dehydrogenase from Enterobacter sp. (strain 638).